The chain runs to 107 residues: Iron-sulfur cluster assembly protein CyaY (107 aa).

The protein belongs to the frataxin family.

In terms of biological role, involved in iron-sulfur (Fe-S) cluster assembly. May act as a regulator of Fe-S biogenesis. The protein is Iron-sulfur cluster assembly protein CyaY of Thioalkalivibrio sulfidiphilus (strain HL-EbGR7).